The sequence spans 94 residues: Co-chaperonin GroES (94 aa).

This sequence belongs to the GroES chaperonin family. In terms of assembly, heptamer of 7 subunits arranged in a ring. Interacts with the chaperonin GroEL.

Its subcellular location is the cytoplasm. Its function is as follows. Together with the chaperonin GroEL, plays an essential role in assisting protein folding. The GroEL-GroES system forms a nano-cage that allows encapsulation of the non-native substrate proteins and provides a physical environment optimized to promote and accelerate protein folding. GroES binds to the apical surface of the GroEL ring, thereby capping the opening of the GroEL channel. The sequence is that of Co-chaperonin GroES from Acetivibrio thermocellus (strain ATCC 27405 / DSM 1237 / JCM 9322 / NBRC 103400 / NCIMB 10682 / NRRL B-4536 / VPI 7372) (Clostridium thermocellum).